Consider the following 100-residue polypeptide: Nucleoid-associated protein ckrop_0143 (100 aa).

This sequence belongs to the YbaB/EbfC family. Homodimer.

It localises to the cytoplasm. The protein localises to the nucleoid. In terms of biological role, binds to DNA and alters its conformation. May be involved in regulation of gene expression, nucleoid organization and DNA protection. This is Nucleoid-associated protein ckrop_0143 from Corynebacterium kroppenstedtii (strain DSM 44385 / JCM 11950 / CIP 105744 / CCUG 35717).